We begin with the raw amino-acid sequence, 319 residues long: tRNA uridine(34) hydroxylase (319 aa).

Residues Lys-127 to Glu-221 form the Rhodanese domain. Cys-181 acts as the Cysteine persulfide intermediate in catalysis.

This sequence belongs to the TrhO family.

It catalyses the reaction uridine(34) in tRNA + AH2 + O2 = 5-hydroxyuridine(34) in tRNA + A + H2O. Catalyzes oxygen-dependent 5-hydroxyuridine (ho5U) modification at position 34 in tRNAs. The polypeptide is tRNA uridine(34) hydroxylase (Bacillus mycoides (strain KBAB4) (Bacillus weihenstephanensis)).